The primary structure comprises 460 residues: V-type ATP synthase beta chain (460 aa).

This sequence belongs to the ATPase alpha/beta chains family.

Functionally, produces ATP from ADP in the presence of a proton gradient across the membrane. The V-type beta chain is a regulatory subunit. This chain is V-type ATP synthase beta chain, found in Thermotoga neapolitana (strain ATCC 49049 / DSM 4359 / NBRC 107923 / NS-E).